The chain runs to 307 residues: 4-hydroxythreonine-4-phosphate dehydrogenase (307 aa).

Residues His121 and Thr122 each contribute to the substrate site. Residues His150, His189, and His246 each coordinate a divalent metal cation. Positions 254, 263, and 272 each coordinate substrate.

This sequence belongs to the PdxA family. In terms of assembly, homodimer. The cofactor is Zn(2+). Mg(2+) is required as a cofactor. Co(2+) serves as cofactor.

The protein localises to the cytoplasm. It carries out the reaction 4-(phosphooxy)-L-threonine + NAD(+) = 3-amino-2-oxopropyl phosphate + CO2 + NADH. It functions in the pathway cofactor biosynthesis; pyridoxine 5'-phosphate biosynthesis; pyridoxine 5'-phosphate from D-erythrose 4-phosphate: step 4/5. Its function is as follows. Catalyzes the NAD(P)-dependent oxidation of 4-(phosphooxy)-L-threonine (HTP) into 2-amino-3-oxo-4-(phosphooxy)butyric acid which spontaneously decarboxylates to form 3-amino-2-oxopropyl phosphate (AHAP). This Campylobacter fetus subsp. fetus (strain 82-40) protein is 4-hydroxythreonine-4-phosphate dehydrogenase.